Here is a 385-residue protein sequence, read N- to C-terminus: Anhydro-N-acetylmuramic acid kinase (385 aa).

12 to 19 serves as a coordination point for ATP; sequence GTSLDGID.

Belongs to the anhydro-N-acetylmuramic acid kinase family.

The enzyme catalyses 1,6-anhydro-N-acetyl-beta-muramate + ATP + H2O = N-acetyl-D-muramate 6-phosphate + ADP + H(+). The protein operates within amino-sugar metabolism; 1,6-anhydro-N-acetylmuramate degradation. It functions in the pathway cell wall biogenesis; peptidoglycan recycling. Its function is as follows. Catalyzes the specific phosphorylation of 1,6-anhydro-N-acetylmuramic acid (anhMurNAc) with the simultaneous cleavage of the 1,6-anhydro ring, generating MurNAc-6-P. Is required for the utilization of anhMurNAc either imported from the medium or derived from its own cell wall murein, and thus plays a role in cell wall recycling. This is Anhydro-N-acetylmuramic acid kinase from Bacillus thuringiensis (strain Al Hakam).